The primary structure comprises 140 residues: Endoribonuclease YbeY (140 aa).

Zn(2+) contacts are provided by His105, His109, and Asp115.

Belongs to the endoribonuclease YbeY family. It depends on Zn(2+) as a cofactor.

It localises to the cytoplasm. Its function is as follows. Single strand-specific metallo-endoribonuclease involved in late-stage 70S ribosome quality control and in maturation of the 3' terminus of the 16S rRNA. The sequence is that of Endoribonuclease YbeY from Flavobacterium psychrophilum (strain ATCC 49511 / DSM 21280 / CIP 103535 / JIP02/86).